The following is a 52-amino-acid chain: ATP synthase F(0) complex subunit 8 (52 aa).

A helical transmembrane segment spans residues 10–30; sequence LMTHLWAWLMLYLTTQKIKTF.

This sequence belongs to the ATPase protein 8 family. In terms of assembly, component of the ATP synthase complex composed at least of ATP5F1A/subunit alpha, ATP5F1B/subunit beta, ATP5MC1/subunit c (homooctomer), MT-ATP6/subunit a, MT-ATP8/subunit 8, ATP5ME/subunit e, ATP5MF/subunit f, ATP5MG/subunit g, ATP5MK/subunit k, ATP5MJ/subunit j, ATP5F1C/subunit gamma, ATP5F1D/subunit delta, ATP5F1E/subunit epsilon, ATP5PF/subunit F6, ATP5PB/subunit b, ATP5PD/subunit d, ATP5PO/subunit OSCP. ATP synthase complex consists of a soluble F(1) head domain (subunits alpha(3) and beta(3)) - the catalytic core - and a membrane F(0) domain - the membrane proton channel (subunits c, a, 8, e, f, g, k and j). These two domains are linked by a central stalk (subunits gamma, delta, and epsilon) rotating inside the F1 region and a stationary peripheral stalk (subunits F6, b, d, and OSCP).

Its subcellular location is the mitochondrion membrane. Subunit 8, of the mitochondrial membrane ATP synthase complex (F(1)F(0) ATP synthase or Complex V) that produces ATP from ADP in the presence of a proton gradient across the membrane which is generated by electron transport complexes of the respiratory chain. ATP synthase complex consist of a soluble F(1) head domain - the catalytic core - and a membrane F(1) domain - the membrane proton channel. These two domains are linked by a central stalk rotating inside the F(1) region and a stationary peripheral stalk. During catalysis, ATP synthesis in the catalytic domain of F(1) is coupled via a rotary mechanism of the central stalk subunits to proton translocation. In vivo, can only synthesize ATP although its ATP hydrolase activity can be activated artificially in vitro. Part of the complex F(0) domain. The sequence is that of ATP synthase F(0) complex subunit 8 from Lycodon semicarinatus (Ryukyu odd-tooth snake).